Consider the following 186-residue polypeptide: PRKR-interacting protein 1 (186 aa).

Positions 1 to 50 (MASSAASSVRPPRPKKEPQALIIPKNAAEEQKLKLERLMKNPDKAVPIPE) are interaction with EIF2AK2. 2 disordered regions span residues 39-61 (MKNP…RPPP) and 119-186 (AAEE…ITGR). The interval 51–143 (KMSEWAPRPP…LKEKKLLAKK (93 aa)) is required for RNA-binding. A coiled-coil region spans residues 86–153 (RRREYQRQDY…MKLEQKKQSE (68 aa)). A required for nuclear localization region spans residues 126 to 138 (KRRKKRQKLKEKK). The span at 126–143 (KRRKKRQKLKEKKLLAKK) shows a compositional bias: basic residues. Residues 153 to 162 (EASSETQEQP) show a composition bias toward polar residues. Over residues 170–179 (SGTEDEEEDA) the composition is skewed to acidic residues.

It belongs to the PRKRIP1 family. Component of the pre-catalytic and post-catalytic spliceosome complexes. Interacts with EIF2AK2.

It localises to the nucleus. Its subcellular location is the nucleolus. Required for pre-mRNA splicing as component of the spliceosome. Binds double-stranded RNA. Inhibits EIF2AK2 kinase activity. The sequence is that of PRKR-interacting protein 1 (PRKRIP1) from Bos taurus (Bovine).